The chain runs to 439 residues: tRNA modification GTPase MnmE (439 aa).

The (6S)-5-formyl-5,6,7,8-tetrahydrofolate site is built by R23, E80, and K120. Residues 217 to 365 (GLKIVIAGEP…LLTALQSHLP (149 aa)) form the TrmE-type G domain. A K(+)-binding site is contributed by N227. Residues 227-232 (NAGKSS), 246-252 (TEVAGTT), and 271-274 (DTAG) each bind GTP. S231 serves as a coordination point for Mg(2+). Residues T246, V248, and T251 each contribute to the K(+) site. T252 provides a ligand contact to Mg(2+). K439 is a (6S)-5-formyl-5,6,7,8-tetrahydrofolate binding site.

The protein belongs to the TRAFAC class TrmE-Era-EngA-EngB-Septin-like GTPase superfamily. TrmE GTPase family. In terms of assembly, homodimer. Heterotetramer of two MnmE and two MnmG subunits. K(+) serves as cofactor.

It is found in the cytoplasm. Its function is as follows. Exhibits a very high intrinsic GTPase hydrolysis rate. Involved in the addition of a carboxymethylaminomethyl (cmnm) group at the wobble position (U34) of certain tRNAs, forming tRNA-cmnm(5)s(2)U34. This is tRNA modification GTPase MnmE from Rhizobium meliloti (strain 1021) (Ensifer meliloti).